The chain runs to 89 residues: Small ribosomal subunit protein uS15 (89 aa).

Residues 1–21 (MALSKEQKTETLKEFGLHETD) show a composition bias toward basic and acidic residues. Positions 1-22 (MALSKEQKTETLKEFGLHETDT) are disordered.

The protein belongs to the universal ribosomal protein uS15 family. As to quaternary structure, part of the 30S ribosomal subunit. Forms a bridge to the 50S subunit in the 70S ribosome, contacting the 23S rRNA.

One of the primary rRNA binding proteins, it binds directly to 16S rRNA where it helps nucleate assembly of the platform of the 30S subunit by binding and bridging several RNA helices of the 16S rRNA. Its function is as follows. Forms an intersubunit bridge (bridge B4) with the 23S rRNA of the 50S subunit in the ribosome. This Corynebacterium jeikeium (strain K411) protein is Small ribosomal subunit protein uS15.